The primary structure comprises 481 residues: Serralysin B (481 aa).

The propeptide occupies M1–A15. Residue H189 participates in Zn(2+) binding. E190 is an active-site residue. Zn(2+) contacts are provided by H193 and Y230. R267, G269, T271, D299, G301, G302, D304, T341, E343, G348, G350, D352, N357, A359, N361, G365, G366, A367, G368, D370, G374, G377, D379, G383, G384, A385, G386, D388, D397, D404, and D414 together coordinate Ca(2+). 3 Hemolysin-type calcium-binding repeats span residues I346–L363, Q364–L381, and T382–T399.

Belongs to the peptidase M10B family. Requires Ca(2+) as cofactor. The cofactor is Zn(2+).

Its subcellular location is the secreted. It carries out the reaction Preferential cleavage of bonds with hydrophobic residues in P1'.. In Dickeya chrysanthemi (Pectobacterium chrysanthemi), this protein is Serralysin B (prtB).